We begin with the raw amino-acid sequence, 173 residues long: ATP synthase subunit beta, mitochondrial (173 aa).

It belongs to the ATPase alpha/beta chains family. As to quaternary structure, F-type ATPases have 2 components, CF(1) - the catalytic core - and CF(0) - the membrane proton channel. CF(1) has five subunits: alpha(3), beta(3), gamma(1), delta(1), epsilon(1). CF(0) has three main subunits: a, b and c.

It is found in the mitochondrion. The protein resides in the mitochondrion inner membrane. The catalysed reaction is ATP + H2O + 4 H(+)(in) = ADP + phosphate + 5 H(+)(out). Its function is as follows. Mitochondrial membrane ATP synthase (F(1)F(0) ATP synthase or Complex V) produces ATP from ADP in the presence of a proton gradient across the membrane which is generated by electron transport complexes of the respiratory chain. F-type ATPases consist of two structural domains, F(1) - containing the extramembraneous catalytic core and F(0) - containing the membrane proton channel, linked together by a central stalk and a peripheral stalk. During catalysis, ATP synthesis in the catalytic domain of F(1) is coupled via a rotary mechanism of the central stalk subunits to proton translocation. Subunits alpha and beta form the catalytic core in F(1). Rotation of the central stalk against the surrounding alpha(3)beta(3) subunits leads to hydrolysis of ATP in three separate catalytic sites on the beta subunits. This is ATP synthase subunit beta, mitochondrial (ATPB) from Actinidia deliciosa (Kiwi).